The primary structure comprises 251 residues: MLAKRIIPCLDVTNGRVVKGVNFVELKDAGDPVEIARGYNEAGADELTFLDITASSDNRDLILHIVEAVASEVFIPLTVGGGVRAVADVQRLLNAGADKVSINTSAVTNPQLVKDAADRYGSQCIVVAIDAKRVGDHWEVFTHGGRTATGLDAVEWAKKMESLGAGELLLTSMDRDGTKTGFDLELTRAISDAVDVPIVASGGVGTLQHMVDGVREGRADAVLAASIFHFGEYRVDEAKAYMKRHGIEVRL.

Residues Asp11 and Asp130 contribute to the active site.

The protein belongs to the HisA/HisF family. In terms of assembly, heterodimer of HisH and HisF.

It localises to the cytoplasm. It carries out the reaction 5-[(5-phospho-1-deoxy-D-ribulos-1-ylimino)methylamino]-1-(5-phospho-beta-D-ribosyl)imidazole-4-carboxamide + L-glutamine = D-erythro-1-(imidazol-4-yl)glycerol 3-phosphate + 5-amino-1-(5-phospho-beta-D-ribosyl)imidazole-4-carboxamide + L-glutamate + H(+). Its pathway is amino-acid biosynthesis; L-histidine biosynthesis; L-histidine from 5-phospho-alpha-D-ribose 1-diphosphate: step 5/9. IGPS catalyzes the conversion of PRFAR and glutamine to IGP, AICAR and glutamate. The HisF subunit catalyzes the cyclization activity that produces IGP and AICAR from PRFAR using the ammonia provided by the HisH subunit. This Thiobacillus denitrificans (strain ATCC 25259 / T1) protein is Imidazole glycerol phosphate synthase subunit HisF.